The following is a 261-amino-acid chain: N-acetyltransferase ECO1 (261 aa).

The CCHH-type zinc finger occupies 29-53 (LKCPKCEMKYSPNSIDDVATHKKYH). The region spanning 102-261 (VMIQENKPAE…SGHILIPCYL (160 aa)) is the N-acetyltransferase domain.

Belongs to the acetyltransferase family. ECO subfamily.

It is found in the nucleus. In terms of biological role, probable acetyltransferase required for the establishment of sister chromatid cohesion and couple the processes of cohesion and DNA replication to ensure that only sister chromatids become paired together. In contrast to the structural cohesins, the deposition and establishment factors are required only during S phase. Acts by acetylating the cohesin complex component SMC3. The chain is N-acetyltransferase ECO1 (ECO1) from Candida glabrata (strain ATCC 2001 / BCRC 20586 / JCM 3761 / NBRC 0622 / NRRL Y-65 / CBS 138) (Yeast).